A 258-amino-acid chain; its full sequence is Chemokine-binding protein (258 aa).

Residues 1 to 17 (MKQYIVLACMCLAAAAM) form the signal peptide. The disordered stretch occupies residues 65 to 93 (TEITESESDPDPEVESEDDSTSVEDVDPP). Acidic residues predominate over residues 68 to 91 (TESESDPDPEVESEDDSTSVEDVD).

The protein belongs to the orthopoxvirus OPG001 family. In terms of assembly, binds to host CC chemokines, such as RANTES/CCL5, MIP-1alpha/CCL3, MCP-1/CCL2 and eotaxin.

It localises to the secreted. Functionally, inhibits host immune defense by binding to host chemokines. Binds host CC chemokines (beta chemokines) such as RANTES with high affinity, but not CXC or C chemokines (alpha and gamma chemokines). The chain is Chemokine-binding protein (OPG001) from Homo sapiens (Human).